Here is a 110-residue protein sequence, read N- to C-terminus: UPF0060 membrane protein Francci3_2786 (110 aa).

The next 4 helical transmembrane spans lie at 8 to 28 (LLFVVAAVTEIGGAWLVWQGV), 33 to 53 (GPVWVGLGIGFLAAYGFVATL), 62 to 82 (ILAAYGGVFVAGSLLWGVAVD), and 87 to 107 (DRYDLAGAAICLLGVAVIMYA).

Belongs to the UPF0060 family.

The protein resides in the cell membrane. The polypeptide is UPF0060 membrane protein Francci3_2786 (Frankia casuarinae (strain DSM 45818 / CECT 9043 / HFP020203 / CcI3)).